The chain runs to 844 residues: Neuronal PAS domain-containing protein 4B (844 aa).

The tract at residues 61 to 74 (KMYRSTKGASKARR) is basic motif; degenerate. One can recognise a bHLH domain in the interval 61–114 (KMYRSTKGASKARRDQINAEIRSLKELLPISDADKARLSYLHIMSLACIYTRKS). The tract at residues 75 to 114 (DQINAEIRSLKELLPISDADKARLSYLHIMSLACIYTRKS) is helix-loop-helix motif. 2 PAS domains span residues 132–190 (SLPE…PVDH) and 294–343 (DMRI…LHNG). Polar residues predominate over residues 410 to 422 (SRQSSDPLSSPDQ). Disordered stretches follow at residues 410-432 (SRQS…SGLS), 444-479 (GRSS…GGGH), 702-725 (PLPN…SYSQ), and 757-784 (TEGG…EAPA). Over residues 704–716 (PNLPSPSPVPPSP) the composition is skewed to pro residues.

Efficient DNA binding requires dimerization with another bHLH protein.

The protein resides in the nucleus. In terms of biological role, transcription factor expressed in neurons of the brain that regulates the excitatory-inhibitory balance within neural circuits and is required for contextual memory in the hippocampus. Plays a key role in the structural and functional plasticity of neurons. Acts as an early-response transcription factor in both excitatory and inhibitory neurons, where it induces distinct but overlapping sets of late-response genes in these two types of neurons, allowing the synapses that form on inhibitory and excitatory neurons to be modified by neuronal activity in a manner specific to their function within a circuit, thereby facilitating appropriate circuit responses to sensory experience. This chain is Neuronal PAS domain-containing protein 4B (npas4b), found in Danio rerio (Zebrafish).